The chain runs to 404 residues: XK-related protein 8 (404 aa).

The next 8 membrane-spanning stretches (helical) occupy residues 14-34 (FVFS…DVWL), 44-64 (VTWF…VQTF), 169-189 (AVQF…VVDY), 209-229 (LIYF…LALC), 232-252 (VLSG…ALWA), 262-282 (SVAG…FSWF), 293-313 (SAIY…TWWC), and 324-344 (ALAL…FKAL).

The protein belongs to the XK family.

The protein localises to the cell membrane. The catalysed reaction is a 1,2-diacyl-sn-glycero-3-phospho-L-serine(in) = a 1,2-diacyl-sn-glycero-3-phospho-L-serine(out). In terms of biological role, phospholipid scramblase that promotes phosphatidylserine exposure on apoptotic cell surface, possibly by mediating phospholipid scrambling. Phosphatidylserine is a specific marker only present at the surface of apoptotic cells and acts as a specific signal for engulfment. This Gasterosteus aculeatus (Three-spined stickleback) protein is XK-related protein 8.